The chain runs to 435 residues: Tol-Pal system protein TolB (435 aa).

An N-terminal signal peptide occupies residues 1-20; that stretch reads MRKIIAGVFIFVFLISNLYA.

This sequence belongs to the TolB family. The Tol-Pal system is composed of five core proteins: the inner membrane proteins TolA, TolQ and TolR, the periplasmic protein TolB and the outer membrane protein Pal. They form a network linking the inner and outer membranes and the peptidoglycan layer.

The protein resides in the periplasm. Functionally, part of the Tol-Pal system, which plays a role in outer membrane invagination during cell division and is important for maintaining outer membrane integrity. The chain is Tol-Pal system protein TolB from Francisella tularensis subsp. mediasiatica (strain FSC147).